Reading from the N-terminus, the 448-residue chain is Homogentisate 1,2-dioxygenase (448 aa).

The active-site Proton acceptor is His-303. Fe cation is bound by residues His-346 and Glu-352. Residues Tyr-361 and His-382 each coordinate homogentisate. His-382 contributes to the Fe cation binding site.

This sequence belongs to the homogentisate dioxygenase family. Hexamer; dimer of trimers. Fe cation serves as cofactor.

The enzyme catalyses homogentisate + O2 = 4-maleylacetoacetate + H(+). The protein operates within amino-acid degradation; L-phenylalanine degradation; acetoacetate and fumarate from L-phenylalanine: step 4/6. Its function is as follows. Involved in the catabolism of homogentisate (2,5-dihydroxyphenylacetate or 2,5-OH-PhAc), a central intermediate in the degradation of phenylalanine and tyrosine. Catalyzes the oxidative ring cleavage of the aromatic ring of homogentisate to yield maleylacetoacetate. The protein is Homogentisate 1,2-dioxygenase of Rhodopseudomonas palustris (strain TIE-1).